The sequence spans 354 residues: Biotin synthase (354 aa).

Residues glycine 64–arginine 282 form the Radical SAM core domain. The [4Fe-4S] cluster site is built by cysteine 79, cysteine 83, and cysteine 86. [2Fe-2S] cluster contacts are provided by cysteine 123, cysteine 154, cysteine 214, and arginine 286.

Belongs to the radical SAM superfamily. Biotin synthase family. In terms of assembly, homodimer. [4Fe-4S] cluster is required as a cofactor. It depends on [2Fe-2S] cluster as a cofactor.

It catalyses the reaction (4R,5S)-dethiobiotin + (sulfur carrier)-SH + 2 reduced [2Fe-2S]-[ferredoxin] + 2 S-adenosyl-L-methionine = (sulfur carrier)-H + biotin + 2 5'-deoxyadenosine + 2 L-methionine + 2 oxidized [2Fe-2S]-[ferredoxin]. It participates in cofactor biosynthesis; biotin biosynthesis; biotin from 7,8-diaminononanoate: step 2/2. Its function is as follows. Catalyzes the conversion of dethiobiotin (DTB) to biotin by the insertion of a sulfur atom into dethiobiotin via a radical-based mechanism. The polypeptide is Biotin synthase (Paracidovorax citrulli (strain AAC00-1) (Acidovorax citrulli)).